Here is a 59-residue protein sequence, read N- to C-terminus: Large ribosomal subunit protein bL32 (59 aa).

The segment at 1-59 (MAVQQNRKSRSRRGMRRSHDALSSAALSIDPTTGEKHRRHHVTPDGFYRGKKVVEVSQD) is disordered. Over residues 7-16 (RKSRSRRGMR) the composition is skewed to basic residues.

Belongs to the bacterial ribosomal protein bL32 family.

In Hahella chejuensis (strain KCTC 2396), this protein is Large ribosomal subunit protein bL32.